The chain runs to 590 residues: Protein Spindly (590 aa).

Residues 1–401 (MSDLEDEIKV…SMARMKALSE (401 aa)) adopt a coiled-coil conformation. Residues 446–590 (NKAQVQKRRR…KTMANECAQQ (145 aa)) are disordered. 2 stretches are compositionally biased toward basic and acidic residues: residues 483-497 (SNEK…HPVE) and 518-527 (RESKSVRICE). Composition is skewed to polar residues over residues 541-554 (VNDS…QTHQ) and 572-590 (QQPT…CAQQ).

This sequence belongs to the Spindly family.

It localises to the chromosome. Its subcellular location is the centromere. It is found in the kinetochore. Required for the localization of dynein and dynactin to the mitotic kintochore. Dynein is believed to control the initial lateral interaction between the kinetochore and spindle microtubules and to facilitate the subsequent formation of end-on kinetochore-microtubule attachments mediated by the NDC80 complex. May act as an adapter protein linking the dynein motor complex to various cargos. This is Protein Spindly (spdl1) from Danio rerio (Zebrafish).